We begin with the raw amino-acid sequence, 535 residues long: CTP synthase (535 aa).

Residues 1-267 are amidoligase domain; sequence MTKYIFVTGG…DKLVCEHMKL (267 aa). Ser13 lines the CTP pocket. Ser13 contacts UTP. Residue 14–19 coordinates ATP; that stretch reads SLGKGI. Position 54 (Tyr54) interacts with L-glutamine. Asp71 serves as a coordination point for ATP. Residues Asp71 and Glu141 each contribute to the Mg(2+) site. Residues 148-150, 188-193, and Lys224 contribute to the CTP site; these read DIE and KTKPTQ. UTP contacts are provided by residues 188 to 193 and Lys224; that span reads KTKPTQ. A Glutamine amidotransferase type-1 domain is found at 292 to 534; it reads TIGLVGKYVE…VGASLQASES (243 aa). Gly354 is a binding site for L-glutamine. Cys381 (nucleophile; for glutamine hydrolysis) is an active-site residue. L-glutamine contacts are provided by residues 382 to 385, Glu405, and Arg462; that span reads LGMQ. Residues His507 and Glu509 contribute to the active site.

This sequence belongs to the CTP synthase family. Homotetramer.

It carries out the reaction UTP + L-glutamine + ATP + H2O = CTP + L-glutamate + ADP + phosphate + 2 H(+). The enzyme catalyses L-glutamine + H2O = L-glutamate + NH4(+). It catalyses the reaction UTP + NH4(+) + ATP = CTP + ADP + phosphate + 2 H(+). It participates in pyrimidine metabolism; CTP biosynthesis via de novo pathway; CTP from UDP: step 2/2. With respect to regulation, allosterically activated by GTP, when glutamine is the substrate; GTP has no effect on the reaction when ammonia is the substrate. The allosteric effector GTP functions by stabilizing the protein conformation that binds the tetrahedral intermediate(s) formed during glutamine hydrolysis. Inhibited by the product CTP, via allosteric rather than competitive inhibition. Functionally, catalyzes the ATP-dependent amination of UTP to CTP with either L-glutamine or ammonia as the source of nitrogen. Regulates intracellular CTP levels through interactions with the four ribonucleotide triphosphates. The chain is CTP synthase from Bacillus pumilus (strain SAFR-032).